A 493-amino-acid polypeptide reads, in one-letter code: tRNA-2-methylthio-N(6)-dimethylallyladenosine synthase (493 aa).

The segment covering 1–14 (MPMTGLLQTTLSTA) has biased composition (polar residues). The disordered stretch occupies residues 1-31 (MPMTGLLQTTLSTADQDRSGPAATTGDTPAR). The MTTase N-terminal domain occupies 35–155 (KRLHVITWGC…LGGMVRRAMN (121 aa)). [4Fe-4S] cluster-binding residues include Cys44, Cys80, Cys118, Cys199, Cys203, and Cys206. A Radical SAM core domain is found at 185–417 (LAGGRTAFLT…QALLRTQQEA (233 aa)). A TRAM domain is found at 420–482 (TACIGKTVNV…TNSLSATLPD (63 aa)).

This sequence belongs to the methylthiotransferase family. MiaB subfamily. As to quaternary structure, monomer. [4Fe-4S] cluster serves as cofactor.

The protein localises to the cytoplasm. It catalyses the reaction N(6)-dimethylallyladenosine(37) in tRNA + (sulfur carrier)-SH + AH2 + 2 S-adenosyl-L-methionine = 2-methylsulfanyl-N(6)-dimethylallyladenosine(37) in tRNA + (sulfur carrier)-H + 5'-deoxyadenosine + L-methionine + A + S-adenosyl-L-homocysteine + 2 H(+). Catalyzes the methylthiolation of N6-(dimethylallyl)adenosine (i(6)A), leading to the formation of 2-methylthio-N6-(dimethylallyl)adenosine (ms(2)i(6)A) at position 37 in tRNAs that read codons beginning with uridine. This chain is tRNA-2-methylthio-N(6)-dimethylallyladenosine synthase, found in Granulibacter bethesdensis (strain ATCC BAA-1260 / CGDNIH1).